The following is a 224-amino-acid chain: Endoplasmic reticulum vesicle protein 25 (224 aa).

The first 25 residues, 1-25 (MIPPRSLGSTAALLLVLLFTTLASA), serve as a signal peptide directing secretion. Topologically, residues 26-190 (IKFDLPSNAH…ADTNLSTNMR (165 aa)) are lumenal. A GOLD domain is found at 38 to 131 (TKCIWNYALS…IPVVTIDLDV (94 aa)). The helical transmembrane segment at 191 to 211 (VTNFAILTLIALIALGVWQVF) threads the bilayer. At 212–224 (HLRGFFKRKYLID) the chain is on the cytoplasmic side.

The protein belongs to the EMP24/GP25L family.

Its subcellular location is the endoplasmic reticulum membrane. It is found in the golgi apparatus membrane. In terms of biological role, constituent of COPII-coated endoplasmic reticulum-derived transport vesicles. Required for efficient transport of a subset of secretory proteins to the Golgi. Facilitates retrograde transport from the Golgi to the endoplasmic reticulum. This is Endoplasmic reticulum vesicle protein 25 (ERV25) from Mycosarcoma maydis (Corn smut fungus).